Consider the following 717-residue polypeptide: Ribosomal RNA large subunit methyltransferase K/L (717 aa).

The 112-residue stretch at 44–155 folds into the THUMP domain; that stretch reads DAYKVCIYSY…KQFVNVFLCL (112 aa).

Belongs to the methyltransferase superfamily. RlmKL family.

Its subcellular location is the cytoplasm. The enzyme catalyses guanosine(2445) in 23S rRNA + S-adenosyl-L-methionine = N(2)-methylguanosine(2445) in 23S rRNA + S-adenosyl-L-homocysteine + H(+). It carries out the reaction guanosine(2069) in 23S rRNA + S-adenosyl-L-methionine = N(2)-methylguanosine(2069) in 23S rRNA + S-adenosyl-L-homocysteine + H(+). In terms of biological role, specifically methylates the guanine in position 2445 (m2G2445) and the guanine in position 2069 (m7G2069) of 23S rRNA. This chain is Ribosomal RNA large subunit methyltransferase K/L, found in Francisella tularensis subsp. tularensis (strain SCHU S4 / Schu 4).